We begin with the raw amino-acid sequence, 113 residues long: DNA-binding protein PTO0204 (113 aa).

The protein belongs to the PDCD5 family.

The protein is DNA-binding protein PTO0204 of Picrophilus torridus (strain ATCC 700027 / DSM 9790 / JCM 10055 / NBRC 100828 / KAW 2/3).